A 651-amino-acid chain; its full sequence is BTB/POZ domain-containing protein At3g44820 (651 aa).

The BTB domain maps to 25-96 (SDITVVVDDV…CYGARVDITS (72 aa)). One can recognise an NPH3 domain in the interval 211 to 509 (DWWYEDISYL…LQVLFFEQMH (299 aa)). The tract at residues 611–651 (DAKNDTVQNSVSSTPRSATADHTLPRSSRHSKHRKSFSFFG) is disordered. Residues 615 to 627 (DTVQNSVSSTPRS) show a composition bias toward polar residues. The segment covering 637–651 (SSRHSKHRKSFSFFG) has biased composition (basic residues).

Belongs to the NPH3 family.

The protein operates within protein modification; protein ubiquitination. Its function is as follows. May act as a substrate-specific adapter of an E3 ubiquitin-protein ligase complex (CUL3-RBX1-BTB) which mediates the ubiquitination and subsequent proteasomal degradation of target proteins. This is BTB/POZ domain-containing protein At3g44820 from Arabidopsis thaliana (Mouse-ear cress).